We begin with the raw amino-acid sequence, 597 residues long: Indole-3-acetic acid-amido synthetase GH3.4 (597 aa).

Belongs to the IAA-amido conjugating enzyme family.

Catalyzes the synthesis of indole-3-acetic acid (IAA)-amino acid conjugates, providing a mechanism for the plant to cope with the presence of excess auxin. Strongly reactive with Glu, Gln, Trp, Asp, Ala, Leu, Phe, Gly, Tyr, Met, Ile and Val. Little or no product formation with His, Ser, Thr, Arg, Lys, or Cys. Also active on pyruvic and butyric acid analogs of IAA, PAA and the synthetic auxin naphthaleneacetic acid (NAA). The two chlorinated synthetic auxin herbicides 2,4-D and 3,6-dichloro-o-anisic acid (dicamba) cannot be used as substrates. This chain is Indole-3-acetic acid-amido synthetase GH3.4 (GH3.4), found in Arabidopsis thaliana (Mouse-ear cress).